We begin with the raw amino-acid sequence, 580 residues long: MPPIKRSKPDGGVKKISITATDVTPAKGVEEKMSWKEYKKMKQHTGGGTRNKLKKKQRPPTENTEGRAKKPKVLTKEQLERHDTGADQIDPSSMRSKLQQEKMKVTKDKFQRRIEATAKAEKRLVENTGFVAPDEEDHSLTYSIRQKDIAESVDLAAATKHFELKLPRFGPYHIDYTDNGRHLVIGGRKGHLAALDWQTKHLHFEQSVMEKVSDVKFLHTENFIAVAQKNYTYVYDNLGTELHCLKTMYDTARLEFLPHHFLLVGSSRNSFLNYVDVSVGKQVASFATKSGTLDVMCQNPANAIIHTGHTNGTVSLWSPNSKEPLVKILTHLSAVKGIAVDDQGNYMATTGLDRKCRIWDVRMFRQLHAYSLPFGVSNVAISQKMNVACAVGNHVQVFRGMHNGTCKEPYLVHNCGGVVTDLRFVPWEDVLGIGHAGGFTSMLVPGAGDPNVDTLRSNPYETKSQRKEREIKQLLDKIQPELISLNPDDINKVNEGLLELEEEERKKILYIRPMAVQYTPRHKMRSKKSGWKMEARKNIVKDQIRMERNMEKHAVEKEVFEAPEVDDEAPKKKHILDRLK.

The interval 34–108 is disordered; sequence SWKEYKKMKQ…QQEKMKVTKD (75 aa). Composition is skewed to basic and acidic residues over residues 64 to 85 and 98 to 108; these read TEGR…HDTG and LQQEKMKVTKD. 6 WD repeats span residues 193 to 234, 235 to 272, 274 to 312, 315 to 354, 357 to 396, and 399 to 436; these read AALD…YTYV, YDNL…NSFL, YVDV…HTNG, SLWS…GLDR, RIWD…NHVQ, and RGMH…IGHA.

As to quaternary structure, part of the small subunit (SSU) processome.

It localises to the nucleus. The protein resides in the nucleolus. Scaffold component of the nucleolar structure. Part of the small subunit (SSU) processome, first precursor of the small eukaryotic ribosomal subunit. Required for 18S rRNA processing. Plays a role in negative regulation of detoxification genes by inhibiting protein levels of transcription factor skn-1, leading to down-regulation of skn-1 target genes. The polypeptide is WD repeat-containing protein 46 (Caenorhabditis elegans).